Consider the following 563-residue polypeptide: Secreted lipase ARB07186/07185 (563 aa).

The signal sequence occupies residues 1–20 (MAKYDFVMLWILTLTAAIAA). A disulfide bond links Cys83 and Cys101. Ser215 functions as the Acyl-ester intermediate in the catalytic mechanism. Cys268 and Cys281 are joined by a disulfide.

It belongs to the type-B carboxylesterase/lipase family.

It is found in the secreted. It carries out the reaction a triacylglycerol + H2O = a diacylglycerol + a fatty acid + H(+). This is Secreted lipase ARB07186/07185 from Arthroderma benhamiae (strain ATCC MYA-4681 / CBS 112371) (Trichophyton mentagrophytes).